Consider the following 358-residue polypeptide: MKPFPRAEISSSALQNNLAVLRQQARASQVMAVVKANGYGHGLLNVANCLVNADGFGLARLEEALELRAGGVKARLLLLEGFFRSTDLPLLVAHDIDTVVHHESQIEMLEQVKLTKPVTVWLKVDSGMHRLGVTPEQFATVYARLMACPNIAKPIHLMTHFACADEPDNHYTDVQMAAFNELTAGLPGFRTLANSAGALYWPKSQGDWIRPGIALYGVSPVAGDCGTNHGLIPAMNLVSRLIAVRDHKANQPVGYGCYWTAKQDTRLGVVAIGYGDGYPRNAPEGTPVWVNGRRVPIVGRVSMDMLTVDLGQDATDKVGDDVLLWGQDLPVEEVAERIGTIAYELVTKLTPRVAVCLA.

The active-site Proton acceptor; specific for D-alanine is the K35. K35 carries the post-translational modification N6-(pyridoxal phosphate)lysine. R130 is a substrate binding site. Catalysis depends on Y255, which acts as the Proton acceptor; specific for L-alanine. Residue M303 coordinates substrate.

This sequence belongs to the alanine racemase family. It depends on pyridoxal 5'-phosphate as a cofactor.

The enzyme catalyses L-alanine = D-alanine. It functions in the pathway amino-acid biosynthesis; D-alanine biosynthesis; D-alanine from L-alanine: step 1/1. Catalyzes the interconversion of L-alanine and D-alanine. May also act on other amino acids. The polypeptide is Alanine racemase (alr) (Shewanella sp. (strain W3-18-1)).